We begin with the raw amino-acid sequence, 245 residues long: Probable metal transport system ATP-binding protein CPn_0542/CP_0210/CPj0542/CpB0563 (245 aa).

Residues 5–240 (ILAEGLAFRY…CCHPYKNQEF (236 aa)) form the ABC transporter domain. 39 to 46 (GPNGGGKS) is an ATP binding site.

This sequence belongs to the ABC transporter superfamily.

Its subcellular location is the cell inner membrane. Its function is as follows. Part of an ATP-driven transport system CPn0541/CPn0542/CPn0543 for a metal. Probably responsible for energy coupling to the transport system. The protein is Probable metal transport system ATP-binding protein CPn_0542/CP_0210/CPj0542/CpB0563 of Chlamydia pneumoniae (Chlamydophila pneumoniae).